A 211-amino-acid chain; its full sequence is FMN-dependent NADH:quinone oxidoreductase 3 (211 aa).

An FMN-binding site is contributed by methionine 102–phenylalanine 105.

This sequence belongs to the azoreductase type 1 family. In terms of assembly, homodimer. FMN serves as cofactor.

The catalysed reaction is 2 a quinone + NADH + H(+) = 2 a 1,4-benzosemiquinone + NAD(+). It catalyses the reaction N,N-dimethyl-1,4-phenylenediamine + anthranilate + 2 NAD(+) = 2-(4-dimethylaminophenyl)diazenylbenzoate + 2 NADH + 2 H(+). In terms of biological role, quinone reductase that provides resistance to thiol-specific stress caused by electrophilic quinones. Functionally, also exhibits azoreductase activity. Catalyzes the reductive cleavage of the azo bond in aromatic azo compounds to the corresponding amines. This is FMN-dependent NADH:quinone oxidoreductase 3 from Bacillus anthracis.